Consider the following 452-residue polypeptide: MELALRRSPVPRWLLLLPLLLGLNAGAVIDWPTEEGKEVWDYVTVRKDAYMFWWLYYATNSCKNFSELPLVMWLQGGPGGSSTGFGNFEEIGPLDSDLKPRKTTWLQAASLLFVDNPVGTGFSYVNGSGAYAKDLAMVASDMMVLLKTFFSCHKEFQTVPFYIFSESYGGKMAAGIGLELYKAIQRGTIKCNFAGVALGDSWISPVDSVLSWGPYLYSMSLLEDKGLAEVSKVAEQVLNAVNKGLYREATELWGKAEMIIEQNTDGVNFYNILTKSTPTSTMESSLEFTQSHLVCLCQRHVRHLQRDALSQLMNGPIRKKLKIIPEDQSWGGQATNVFVNMEEDFMKPVISIVDELLEAGINVTVYNGQLDLIVDTMGQEAWVRKLKWPELPKFSQLKWKALYSDPKSLETSAFVKSYKNLAFYWILKAGHMVPSDQGDMALKMMRLVTQQE.

The first 26 residues, 1–26, serve as a signal peptide directing secretion; the sequence is MELALRRSPVPRWLLLLPLLLGLNAG. N-linked (GlcNAc...) asparagine glycans are attached at residues Asn-64 and Asn-126. Residue Ser-167 is part of the active site. An N-linked (GlcNAc...) asparagine glycan is attached at Asn-362. Residues Asp-371 and His-431 contribute to the active site.

It belongs to the peptidase S10 family.

It localises to the secreted. In terms of biological role, may be involved in vascular wall and kidney homeostasis. The chain is Retinoid-inducible serine carboxypeptidase (SCPEP1) from Homo sapiens (Human).